A 724-amino-acid polypeptide reads, in one-letter code: Methionine--tRNA ligase (724 aa).

Positions 12-22 match the 'HIGH' region motif; the sequence is PYVNNIPHLGN. 4 residues coordinate Zn(2+): cysteine 143, cysteine 146, cysteine 155, and cysteine 158. The short motif at 330-334 is the 'KMSKS' region element; that stretch reads KFSKS. Position 333 (lysine 333) interacts with ATP. Residues 560–665 form the tRNA-binding domain; sequence FREKVLLRVV…KNPIAGERII (106 aa).

It belongs to the class-I aminoacyl-tRNA synthetase family. MetG type 1 subfamily. Homodimer. Zn(2+) is required as a cofactor.

The protein localises to the cytoplasm. The catalysed reaction is tRNA(Met) + L-methionine + ATP = L-methionyl-tRNA(Met) + AMP + diphosphate. Functionally, is required not only for elongation of protein synthesis but also for the initiation of all mRNA translation through initiator tRNA(fMet) aminoacylation. The polypeptide is Methionine--tRNA ligase (Borreliella afzelii (strain PKo) (Borrelia afzelii)).